Consider the following 250-residue polypeptide: MLGEVSKILAKSSMAIAFTGAGISAESGIPTFRGKDGLWRKYRAEELATPEAFKRDPKLVWEFYKWRIKKILEAKPNPAHIALAELEKMGIIKAVITQNVDDLHREAGSKNVIELHGNIFRVKCTSCSYREYLKESDRIGWLLSQELPRCPKCGSLLRPDVVWFGEALPEKELTTAFSLAKKADVVLVVGTSGVVYPAAYIPYIVKESGGIVVEINIEPSAITPIADFFLRGKAGEVLPKLVEEIRRISK.

The 248-residue stretch at 1–248 folds into the Deacetylase sirtuin-type domain; it reads MLGEVSKILA…PKLVEEIRRI (248 aa). 20 to 39 provides a ligand contact to NAD(+); the sequence is GAGISAESGIPTFRGKDGLW. Substrate contacts are provided by Tyr-64 and Arg-67. 98 to 101 lines the NAD(+) pocket; sequence QNVD. The active-site Proton acceptor is the His-116. Residues Cys-124, Cys-127, Cys-150, and Cys-153 each contribute to the Zn(2+) site. Residues 190 to 192, 216 to 218, and Ala-234 each bind NAD(+); these read GTS and NIE.

This sequence belongs to the sirtuin family. Class III subfamily. Zn(2+) is required as a cofactor.

It is found in the cytoplasm. It carries out the reaction N(6)-acetyl-L-lysyl-[protein] + NAD(+) + H2O = 2''-O-acetyl-ADP-D-ribose + nicotinamide + L-lysyl-[protein]. It catalyses the reaction N(6)-succinyl-L-lysyl-[protein] + NAD(+) + H2O = 2''-O-succinyl-ADP-D-ribose + nicotinamide + L-lysyl-[protein]. Functionally, NAD-dependent lysine deacetylase and desuccinylase that specifically removes acetyl and succinyl groups on target proteins. Modulates the activities of several proteins which are inactive in their acylated form. Deacetylates the N-terminal lysine residue of Alba, the major archaeal chromatin protein and that, in turn, increases Alba's DNA binding affinity, thereby repressing transcription. In Pyrococcus furiosus (strain ATCC 43587 / DSM 3638 / JCM 8422 / Vc1), this protein is NAD-dependent protein deacylase.